The chain runs to 64 residues: Large ribosomal subunit protein bL35 (64 aa).

The protein belongs to the bacterial ribosomal protein bL35 family.

The polypeptide is Large ribosomal subunit protein bL35 (Desulforudis audaxviator (strain MP104C)).